A 429-amino-acid polypeptide reads, in one-letter code: Glutamate-1-semialdehyde 2,1-aminomutase 1 (429 aa).

Position 267 is an N6-(pyridoxal phosphate)lysine (K267).

Belongs to the class-III pyridoxal-phosphate-dependent aminotransferase family. HemL subfamily. In terms of assembly, homodimer. Pyridoxal 5'-phosphate is required as a cofactor.

It localises to the cytoplasm. It carries out the reaction (S)-4-amino-5-oxopentanoate = 5-aminolevulinate. Its pathway is porphyrin-containing compound metabolism; protoporphyrin-IX biosynthesis; 5-aminolevulinate from L-glutamyl-tRNA(Glu): step 2/2. The protein is Glutamate-1-semialdehyde 2,1-aminomutase 1 of Staphylococcus carnosus (strain TM300).